A 469-amino-acid chain; its full sequence is MKHAVKHIHFVGVGGAGMSGIAEILHNLGYTVSGSDQADGAVTRRLAELGIRIFVGHDAAHIAGAQAVVTSTAVKGDNPEVIAARAARIPVVPRAVMLAELMRLKSGIAIAGTHGKTTTTSLVTSVLAEAGLDPTFVIGGKLNSAGANSALGKGDYIVVEADESDASFLNLLPVLSVITNIDADHMDTYGHDFARLKQAFVEFLHKMPFYGAAILCGDDPGVRSIIPMISRPVITYGLGEDVQVRAVDVVALPGGQMRFTCQRRNGTVLPDLEITLNLPGVHSVRNALATIAVATELELPDAPIVSALAKFSGVGRRFQRWGDWPCAAGGEFTLIDDYGHHPVEMAAVIAAARGAFPGRRLVLAFQPHRYTRTRDCFEDFVKVMGSADAILLTEVYAAGEAPIVAADGRSLTRALRVAGKVDPLFVDDVNELPATIAEQALAGDVVIAMGAGTIGGVPARVVELVKERA.

112 to 118 (GTHGKTT) is a binding site for ATP.

The protein belongs to the MurCDEF family.

The protein resides in the cytoplasm. The enzyme catalyses UDP-N-acetyl-alpha-D-muramate + L-alanine + ATP = UDP-N-acetyl-alpha-D-muramoyl-L-alanine + ADP + phosphate + H(+). The protein operates within cell wall biogenesis; peptidoglycan biosynthesis. Its function is as follows. Cell wall formation. This chain is UDP-N-acetylmuramate--L-alanine ligase, found in Leptothrix cholodnii (strain ATCC 51168 / LMG 8142 / SP-6) (Leptothrix discophora (strain SP-6)).